Here is a 478-residue protein sequence, read N- to C-terminus: uncharacterized protein (478 aa).

The ATP-grasp domain maps to 174-366 (RQVLAAAGVP…LIGEHIKLAI (193 aa)). An ATP-binding site is contributed by 214-219 (GSGSRG). Residue Arg-339 is part of the active site.

This is an uncharacterized protein from Sinorhizobium fredii (strain NBRC 101917 / NGR234).